A 134-amino-acid polypeptide reads, in one-letter code: Arsenate reductase (134 aa).

Catalysis depends on nucleophile residues Cys-11, Cys-83, and Cys-90. 2 disulfide bridges follow: Cys-11-Cys-83 and Cys-83-Cys-90.

This sequence belongs to the low molecular weight phosphotyrosine protein phosphatase family. Thioredoxin-coupled ArsC subfamily.

It localises to the cytoplasm. It carries out the reaction arsenate + [thioredoxin]-dithiol + H(+) = arsenite + [thioredoxin]-disulfide + H2O. Catalyzes the reduction of arsenate [As(V)] to arsenite [As(III)]. The chain is Arsenate reductase from Brevibacillus brevis (strain 47 / JCM 6285 / NBRC 100599).